Here is a 1448-residue protein sequence, read N- to C-terminus: Protein clueless (1448 aa).

Disordered stretches follow at residues 1-96 (MALE…HAEK), 110-129 (NANVEKPQEGGAPDAEADGD), and 265-286 (RTRPDSVDCTPPEYVTPGVSDP). Composition is skewed to low complexity over residues 9-26 (NSNATATGDATATATKAS) and 41-66 (NLNPNSNQQNSNQNLVNGNGTAADGP). Over residues 68 to 77 (AKKKGKKNRN) the composition is skewed to basic residues. The span at 78-88 (KSPTEPTTEAV) shows a compositional bias: polar residues. S270 is modified (phosphoserine). The 243-residue stretch at 424–666 (RAEDAFSSKL…RTFPPDVNFL (243 aa)) folds into the Clu domain. Disordered regions lie at residues 726 to 773 (SEKS…SGEA), 958 to 1010 (AVSS…SASD), and 1414 to 1448 (GEAEDAVSKDIKEQPEAGKQLTNGDKAAATEATSS). Basic and acidic residues predominate over residues 748-769 (GAEKPDDKEKKNEEEEKKERST). Residues 966–981 (KKRGNGGKHNKHKSSK) show a composition bias toward basic residues. Low complexity predominate over residues 986-1007 (QQQQQTTGNQNGSSSGSSNSSS). A compositionally biased stretch (basic and acidic residues) spans 1419 to 1429 (AVSKDIKEQPE).

This sequence belongs to the CLU family.

The protein resides in the cytoplasm. MRNA-binding protein involved in proper cytoplasmic distribution of mitochondria. The polypeptide is Protein clueless (Drosophila melanogaster (Fruit fly)).